The chain runs to 327 residues: MTHTLRVIFAGTPEFAAAALAAIHEAGFPVPLVLTQPDRPAGRGMKLQASAVKRYAVEHGIPVAQPPSLRRAGKYPGEAADAIELLRTTPHDVMVVAAYGLLLPQEVLDIPRAGCINIHASLLPRWRGAAPIHRAIEAGDAETGVTLMQMDVGLDTGAMIEEARVAIAPDDTTATLHDRLAADGARLIVDALVRLERDGALPATPQPADGVTYAEKIGKHEAALDWRKPADVLARQVRAFDPFPGGVATLDGAAIKLWAAEPVAARGDAVPGTIVDAAPEGVIVACGSGALRVTQLQKPGGKRLPAREFLAGSPLAAGQRFALPDGA.

121–124 (SLLP) is a binding site for (6S)-5,6,7,8-tetrahydrofolate.

Belongs to the Fmt family.

The enzyme catalyses L-methionyl-tRNA(fMet) + (6R)-10-formyltetrahydrofolate = N-formyl-L-methionyl-tRNA(fMet) + (6S)-5,6,7,8-tetrahydrofolate + H(+). Functionally, attaches a formyl group to the free amino group of methionyl-tRNA(fMet). The formyl group appears to play a dual role in the initiator identity of N-formylmethionyl-tRNA by promoting its recognition by IF2 and preventing the misappropriation of this tRNA by the elongation apparatus. The sequence is that of Methionyl-tRNA formyltransferase from Burkholderia ambifaria (strain MC40-6).